The chain runs to 300 residues: Probable protein phosphatase 2C 3 (300 aa).

Positions 23–298 (IFAASEMQGW…DNMTTILVYL (276 aa)) constitute a PPM-type phosphatase domain. D57, G58, D237, and D289 together coordinate Mn(2+).

This sequence belongs to the PP2C family. The cofactor is Mg(2+). Mn(2+) serves as cofactor.

It is found in the membrane. The enzyme catalyses O-phospho-L-seryl-[protein] + H2O = L-seryl-[protein] + phosphate. It carries out the reaction O-phospho-L-threonyl-[protein] + H2O = L-threonyl-[protein] + phosphate. Functionally, enzyme with a broad specificity. This is Probable protein phosphatase 2C 3 from Paramecium tetraurelia.